A 243-amino-acid chain; its full sequence is Venom nerve growth factor (243 aa).

The first 18 residues, 1-18, serve as a signal peptide directing secretion; that stretch reads MSMLCYTLIIAFLIGIWA. Positions 19–125 are excised as a propeptide; it reads APKSEDNVPL…TLNRNIRTKR (107 aa). The tract at residues 45 to 66 is disordered; that stretch reads HEGLKTSRNTDQRHLAPKKAED. The segment covering 46–66 has biased composition (basic and acidic residues); sequence EGLKTSRNTDQRHLAPKKAED. Intrachain disulfides connect C139/C204, C182/C232, and C192/C234. N148 carries an N-linked (GlcNAc...) asparagine glycan.

The protein belongs to the NGF-beta family. As to quaternary structure, homodimer; non-covalently linked. Expressed by the venom gland.

It localises to the secreted. Its function is as follows. Nerve growth factor is important for the development and maintenance of the sympathetic and sensory nervous systems. It stimulates division and differentiation of sympathetic and embryonic sensory neurons as well as basal forebrain cholinergic neurons in the brain. Its relevance in the snake venom is not clear. However, it has been shown to inhibit metalloproteinase-dependent proteolysis of platelet glycoprotein Ib alpha, suggesting a metalloproteinase inhibition to prevent metalloprotease autodigestion and/or protection against prey proteases. Binds a lipid between the two protein chains in the homodimer. The lipid-bound form promotes histamine relase from mouse mast cells, contrary to the lipid-free form. This Cryptophis nigrescens (Eastern small-eyed snake) protein is Venom nerve growth factor.